Reading from the N-terminus, the 309-residue chain is Golgi to ER traffic protein 4 homolog (309 aa).

Residues 290–309 (SGGGLASMEVDGPTIEDEMD) are disordered.

Belongs to the GET4 family.

In terms of biological role, may play a role in insertion of tail-anchored proteins into the endoplasmic reticulum membrane. In Dictyostelium discoideum (Social amoeba), this protein is Golgi to ER traffic protein 4 homolog.